The chain runs to 87 residues: MVNVKASMFLTFAGLVLLFVVCYASESEEKEFPKEMLSSIFAVDNDFKQEERDCAGYMRECKEKLCCSGYVCSSRWKWCVLPAPWRR.

An N-terminal signal peptide occupies residues 1 to 24 (MVNVKASMFLTFAGLVLLFVVCYA). Residues 25-52 (SESEEKEFPKEMLSSIFAVDNDFKQEER) constitute a propeptide that is removed on maturation. 3 disulfide bridges follow: C54–C67, C61–C72, and C66–C79.

The protein belongs to the neurotoxin 10 (Hwtx-1) family. 51 (Hntx-8) subfamily. Hntx-8 sub-subfamily. In terms of tissue distribution, expressed by the venom gland.

The protein resides in the secreted. Functionally, ion channel inhibitor. The polypeptide is U3-theraphotoxin-Hhn1a 17 (Cyriopagopus hainanus (Chinese bird spider)).